The chain runs to 279 residues: Oxygen-dependent coproporphyrinogen-III oxidase (279 aa).

Ser-102 provides a ligand contact to substrate. Positions 106 and 116 each coordinate a divalent metal cation. His-116 acts as the Proton donor in catalysis. Asn-118–Arg-120 contributes to the substrate binding site. Residues His-149 and His-179 each contribute to the a divalent metal cation site. The segment at Tyr-244–Ala-279 is important for dimerization.

The protein belongs to the aerobic coproporphyrinogen-III oxidase family. Homodimer. A divalent metal cation serves as cofactor.

It is found in the cytoplasm. It carries out the reaction coproporphyrinogen III + O2 + 2 H(+) = protoporphyrinogen IX + 2 CO2 + 2 H2O. Its pathway is porphyrin-containing compound metabolism; protoporphyrin-IX biosynthesis; protoporphyrinogen-IX from coproporphyrinogen-III (O2 route): step 1/1. In terms of biological role, involved in the heme biosynthesis. Catalyzes the aerobic oxidative decarboxylation of propionate groups of rings A and B of coproporphyrinogen-III to yield the vinyl groups in protoporphyrinogen-IX. This chain is Oxygen-dependent coproporphyrinogen-III oxidase, found in Rickettsia bellii (strain RML369-C).